A 139-amino-acid chain; its full sequence is Small ribosomal subunit protein uS9 (139 aa).

Belongs to the universal ribosomal protein uS9 family.

The polypeptide is Small ribosomal subunit protein uS9 (Coxiella burnetii (strain CbuK_Q154) (Coxiella burnetii (strain Q154))).